A 107-amino-acid polypeptide reads, in one-letter code: IQ domain-containing protein F6 (107 aa).

The IQ domain occupies 42–71 (QEWAVVKVQAQVRMWQARRRFLQARQAACI).

This chain is IQ domain-containing protein F6 (IQCF6), found in Homo sapiens (Human).